The following is a 293-amino-acid chain: Mitochondrial inner membrane protease atp23 (293 aa).

Residues 1–51 (MSPAPTTSAGPASSGIPPSSLPTSTVTEDDTKPSSSSSKANDLLPRYLTND) form a disordered region. The span at 8 to 22 (SAGPASSGIPPSSLP) shows a compositional bias: low complexity. An a divalent metal cation-binding site is contributed by His-190. The active site involves Glu-191. Position 194 (His-194) interacts with a divalent metal cation.

This sequence belongs to the peptidase M76 family.

Its subcellular location is the mitochondrion inner membrane. Functionally, has a dual role in the assembly of mitochondrial ATPase. Acts as a protease that removes N-terminal residues of mitochondrial ATPase CF(0) subunit 6 at the intermembrane space side. Also involved in the correct assembly of the membrane-embedded ATPase CF(0) particle, probably mediating association of subunit 6 with the subunit 9 ring. This chain is Mitochondrial inner membrane protease atp23 (atp23), found in Neurospora crassa (strain ATCC 24698 / 74-OR23-1A / CBS 708.71 / DSM 1257 / FGSC 987).